We begin with the raw amino-acid sequence, 144 residues long: Transcriptional regulator SlyA (144 aa).

Residues 2–135 (ESPLGSDLAR…LIKLIAKLEH (134 aa)) enclose the HTH marR-type domain. The segment at residues 49 to 72 (QIQLAKAIGIEQPSLVRTLDQLEE) is a DNA-binding region (H-T-H motif).

Belongs to the SlyA family. In terms of assembly, homodimer.

In terms of biological role, transcription regulator that can specifically activate or repress expression of target genes. The sequence is that of Transcriptional regulator SlyA from Escherichia coli O127:H6 (strain E2348/69 / EPEC).